The following is a 756-amino-acid chain: Protease KEX1 (756 aa).

An N-terminal signal peptide occupies residues 1–24 (MILSSQLMLALIAVSGYGKAMQVP). N-linked (GlcNAc...) asparagine glycosylation is found at asparagine 121, asparagine 144, and asparagine 152. A Peptidase S8 domain is found at 130–440 (QWHLINPNYP…FGKLDAYNIV (311 aa)). Active-site charge relay system residues include aspartate 164 and histidine 202. 2 cysteine pairs are disulfide-bonded: cysteine 218–cysteine 365 and cysteine 310–cysteine 340. Serine 373 acts as the Charge relay system in catalysis. 2 N-linked (GlcNAc...) asparagine glycosylation sites follow: asparagine 392 and asparagine 538. In terms of domain architecture, P/Homo B spans 449-583 (VNPQGWLYLP…RLKMFGETID (135 aa)). A disordered region spans residues 599 to 632 (AEVKSTESKTTTPTAQTSSFTTTSGEETSGANKL). The segment covering 606–628 (SKTTTPTAQTSSFTTTSGEETSG) has biased composition (low complexity). The chain crosses the membrane as a helical span at residues 641 to 661 (LYLAIFVIGAIVIIIYYLFFL). The disordered stretch occupies residues 715 to 756 (EEELSPRESSSNNPFGNESLESFDNSPDHTSNLLGQNSIPNK). The segment covering 721-756 (RESSSNNPFGNESLESFDNSPDHTSNLLGQNSIPNK) has biased composition (polar residues).

Belongs to the peptidase S8 family. Furin subfamily. Ca(2+) serves as cofactor.

Its subcellular location is the membrane. Its function is as follows. Probably involved in the processing of the precursor of m1-toxin and alpha-factor. This chain is Protease KEX1 (KEX1), found in Kluyveromyces lactis (strain ATCC 8585 / CBS 2359 / DSM 70799 / NBRC 1267 / NRRL Y-1140 / WM37) (Yeast).